The primary structure comprises 561 residues: Urocanate hydratase (561 aa).

NAD(+) is bound by residues 52–53 (GG), Gln130, 176–178 (GMG), Glu196, Arg201, 242–243 (NA), 263–267 (QTSAH), 273–274 (YL), and Tyr322. Residue Cys410 is part of the active site. An NAD(+)-binding site is contributed by Gly492.

Belongs to the urocanase family. It depends on NAD(+) as a cofactor.

The protein resides in the cytoplasm. It carries out the reaction 4-imidazolone-5-propanoate = trans-urocanate + H2O. Its pathway is amino-acid degradation; L-histidine degradation into L-glutamate; N-formimidoyl-L-glutamate from L-histidine: step 2/3. Its function is as follows. Catalyzes the conversion of urocanate to 4-imidazolone-5-propionate. The polypeptide is Urocanate hydratase (Salmonella typhi).